Reading from the N-terminus, the 767-residue chain is MGCTASKVEQEDTVRRCKERRRHMKEAVASRQQLASAHADYLRSLRLTAAALSRFAQGHPSLAVSHHTAPVLLTTAAPALAPTPTPPPPSSTASSSLPPPTPLLPKHQQAPPPPPPTQSHQPPPPVAVRAPRGGPRRLKVPHILSDSSVASPARSSFRKPVVGTPSSSSAWDWENFYPPSPPDSEFFDRRKADLEEANRLRELEEEEKARGYLHPHHLKEEDEVDDDDDEREEEMHCGGWEDDDDHYASTTTSETRSEEGEMGNRSECGFAARSEYGGTAPSEYAAAPLPLPLRRRDERSEAGDSSSTVTAAAEMRMVIRHRTLAEIVAAIEEYFVKAAEAGNGVSELLEASRAQLDRNFRQLKKTVYHSNSLLSSLSSTWTSKPPLAVRYKLDTNALEMESMEGKSHGSTLERLLAWEKKLYQEVKARESVKIEHEKKLSTLQSLEYRGRDSTKLDKTKASINKLQSLIIVTSQAATTTSSAIVRVRDNELAPQLVELCFALLSMWRSMNHFHEIQNEIVQQVRGLVDNSMAESTSDLHRLATRDLEAAVSAWHSNFNRLIKYQRDYIRALYGWLKLTLFQVDSNIPQEAYTSLISRELTTFCDEWKQALDRLPDASASEAIKSFVNVVHVIYTKQAEEMKIKKRTETYSKELEKKTNSLRAIEKKYYQSYSMVGLGLPGSGRDGIESHSFDARDPLAEKKTEIAQCRRKVEDEMTRHAKAVEVTRSMTLNNIQTGLPGMFQAIAGFSGTVVEALDVVCRRAGSVR.

Disordered regions lie at residues 1-20 (MGCT…CKER), 78-187 (PALA…SEFF), and 201-309 (RELE…SSTV). 2 stretches are compositionally biased toward pro residues: residues 81–90 (APTPTPPPPS) and 110–126 (APPP…PPPV). Positions 145–155 (SDSSVASPARS) are enriched in low complexity. A compositionally biased stretch (basic and acidic residues) spans 201-210 (RELEEEEKAR). The segment covering 221–232 (EDEVDDDDDERE) has biased composition (acidic residues). A compositionally biased stretch (basic and acidic residues) spans 255-264 (TRSEEGEMGN).

Highly expressed in young leaves and panicles. Expressed at low levels in roots.

It is found in the cell membrane. In terms of biological role, involved in the regulation of leaf shape formation. May function by coordinating the expression of genes associated with leaf and bulliform cell development. The chain is Protein ROLLING AND ERECT LEAF 2 from Oryza sativa subsp. japonica (Rice).